Here is a 214-residue protein sequence, read N- to C-terminus: Thymidylate kinase (214 aa).

13 to 20 (GPDACGKS) contributes to the ATP binding site.

The protein belongs to the thymidylate kinase family.

The catalysed reaction is dTMP + ATP = dTDP + ADP. In terms of biological role, phosphorylation of dTMP to form dTDP in both de novo and salvage pathways of dTTP synthesis. The polypeptide is Thymidylate kinase (Malacoplasma penetrans (strain HF-2) (Mycoplasma penetrans)).